We begin with the raw amino-acid sequence, 221 residues long: Small ribosomal subunit protein uS3 (221 aa).

The 70-residue stretch at 39 to 108 (IRKFVKKELF…NILINIVEVK (70 aa)) folds into the KH type-2 domain.

Belongs to the universal ribosomal protein uS3 family. In terms of assembly, part of the 30S ribosomal subunit. Forms a tight complex with proteins S10 and S14.

Binds the lower part of the 30S subunit head. Binds mRNA in the 70S ribosome, positioning it for translation. The sequence is that of Small ribosomal subunit protein uS3 from Clostridium botulinum (strain Alaska E43 / Type E3).